The sequence spans 247 residues: 1-(5-phosphoribosyl)-5-[(5-phosphoribosylamino)methylideneamino] imidazole-4-carboxamide isomerase (247 aa).

Asp8 functions as the Proton acceptor in the catalytic mechanism. Asp129 acts as the Proton donor in catalysis.

Belongs to the HisA/HisF family.

It localises to the cytoplasm. The enzyme catalyses 1-(5-phospho-beta-D-ribosyl)-5-[(5-phospho-beta-D-ribosylamino)methylideneamino]imidazole-4-carboxamide = 5-[(5-phospho-1-deoxy-D-ribulos-1-ylimino)methylamino]-1-(5-phospho-beta-D-ribosyl)imidazole-4-carboxamide. It functions in the pathway amino-acid biosynthesis; L-histidine biosynthesis; L-histidine from 5-phospho-alpha-D-ribose 1-diphosphate: step 4/9. This is 1-(5-phosphoribosyl)-5-[(5-phosphoribosylamino)methylideneamino] imidazole-4-carboxamide isomerase from Bradyrhizobium sp. (strain BTAi1 / ATCC BAA-1182).